The chain runs to 389 residues: Lipid-A-disaccharide synthase (389 aa).

This sequence belongs to the LpxB family.

The catalysed reaction is a lipid X + a UDP-2-N,3-O-bis[(3R)-3-hydroxyacyl]-alpha-D-glucosamine = a lipid A disaccharide + UDP + H(+). Its pathway is bacterial outer membrane biogenesis; LPS lipid A biosynthesis. Functionally, condensation of UDP-2,3-diacylglucosamine and 2,3-diacylglucosamine-1-phosphate to form lipid A disaccharide, a precursor of lipid A, a phosphorylated glycolipid that anchors the lipopolysaccharide to the outer membrane of the cell. This Histophilus somni (strain 2336) (Haemophilus somnus) protein is Lipid-A-disaccharide synthase.